We begin with the raw amino-acid sequence, 786 residues long: Endonuclease MutS2 (786 aa).

Residue 335–342 (GPNTGGKT) participates in ATP binding. One can recognise a Smr domain in the interval 711–786 (LDLRGERFEN…GLGVTVVELK (76 aa)).

It belongs to the DNA mismatch repair MutS family. MutS2 subfamily. As to quaternary structure, homodimer. Binds to stalled ribosomes, contacting rRNA.

Functionally, endonuclease that is involved in the suppression of homologous recombination and thus may have a key role in the control of bacterial genetic diversity. In terms of biological role, acts as a ribosome collision sensor, splitting the ribosome into its 2 subunits. Detects stalled/collided 70S ribosomes which it binds and splits by an ATP-hydrolysis driven conformational change. Acts upstream of the ribosome quality control system (RQC), a ribosome-associated complex that mediates the extraction of incompletely synthesized nascent chains from stalled ribosomes and their subsequent degradation. Probably generates substrates for RQC. In Bacillus anthracis (strain A0248), this protein is Endonuclease MutS2.